The chain runs to 401 residues: L-methionine gamma-lyase (401 aa).

Pyridoxal 5'-phosphate is bound by residues 59–61 (YTR) and 89–90 (GI). Residue Y114 coordinates substrate. Pyridoxal 5'-phosphate is bound at residue 210–212 (SAT). K213 bears the N6-(pyridoxal phosphate)lysine mark. Residue R377 participates in substrate binding.

This sequence belongs to the trans-sulfuration enzymes family. L-methionine gamma-lyase subfamily. As to quaternary structure, homotetramer; dimer of active dimers. Pyridoxal 5'-phosphate serves as cofactor.

It carries out the reaction L-methionine + H2O = methanethiol + 2-oxobutanoate + NH4(+). The catalysed reaction is L-homocysteine + H2O = 2-oxobutanoate + hydrogen sulfide + NH4(+) + H(+). Catalyzes the alpha,gamma-elimination of L-methionine to produce methanethiol, 2-oxobutanoate and ammonia; methanethiol (methyl mercaptan) is considered to be one of the main causes of the oral malodor associated with periodontitis and may also play a role in the pathogenicity of T.denticola. Also displays homocysteine desulfhydrase activity, degrading homocysteine to produce hydrogen sulfide, 2-oxobutanoate and ammonia. In Treponema denticola (strain ATCC 35405 / DSM 14222 / CIP 103919 / JCM 8153 / KCTC 15104), this protein is L-methionine gamma-lyase.